Here is a 330-residue protein sequence, read N- to C-terminus: Aspartate--ammonia ligase (330 aa).

The protein belongs to the class-II aminoacyl-tRNA synthetase family. AsnA subfamily.

It is found in the cytoplasm. It carries out the reaction L-aspartate + NH4(+) + ATP = L-asparagine + AMP + diphosphate + H(+). Its pathway is amino-acid biosynthesis; L-asparagine biosynthesis; L-asparagine from L-aspartate (ammonia route): step 1/1. The polypeptide is Aspartate--ammonia ligase (Salmonella schwarzengrund (strain CVM19633)).